Reading from the N-terminus, the 1220-residue chain is ATP-dependent helicase/deoxyribonuclease subunit B (1220 aa).

The region spanning 1 to 281 (MSMRFIVGRA…VFLTETHRFE (281 aa)) is the UvrD-like helicase ATP-binding domain. 8–15 (GRAGTGKS) serves as a coordination point for ATP. One can recognise a UvrD-like helicase C-terminal domain in the interval 283 to 590 (AGLKHLERFY…LVGSLDRSRN (308 aa)). Cys788 contacts [4Fe-4S] cluster. The interval 989–1008 (LAEGSKGSEGSEGSEDSEDS) is disordered. [4Fe-4S] cluster contacts are provided by Cys1128, Cys1131, and Cys1137. Positions 1162 to 1171 (RVQSQDSEQY) are enriched in polar residues. Residues 1162–1220 (RVQSQDSEQYPEQHPPTSVPGETSRRALQKDGGNSPRGQELIWLGEDEAGAGKEDDGHE) form a disordered region. Positions 1211–1220 (GAGKEDDGHE) are enriched in basic and acidic residues.

Belongs to the helicase family. AddB/RexB type 1 subfamily. As to quaternary structure, heterodimer of AddA and AddB. Mg(2+) is required as a cofactor. The cofactor is [4Fe-4S] cluster.

In terms of biological role, the heterodimer acts as both an ATP-dependent DNA helicase and an ATP-dependent, dual-direction single-stranded exonuclease. Recognizes the chi site generating a DNA molecule suitable for the initiation of homologous recombination. The AddB subunit has 5' -&gt; 3' nuclease activity but not helicase activity. This chain is ATP-dependent helicase/deoxyribonuclease subunit B, found in Desulfitobacterium hafniense (strain Y51).